The primary structure comprises 148 residues: MFNKMLVAIDGSDMSAKALDAAVHLAKEQQAELSILHVGREAVVTTSSLTGIVYVPEHFIDEIRNEVKKEGLKILENAKEKAAEKGVQAETIYANGEPAHEILNHAKEKGVSLIVVGSRGISGLKEMMLGSVSHKVSQLSTCPVLIVR.

The first 18 residues, 1 to 18 (MFNKMLVAIDGSDMSAKA), serve as a signal peptide directing secretion.

Belongs to the universal stress protein A family.

The polypeptide is Universal stress protein YxiE (yxiE) (Bacillus subtilis (strain 168)).